Here is a 212-residue protein sequence, read N- to C-terminus: Large ribosomal subunit protein uL3 (212 aa).

Residues 140 to 155 show a composition bias toward polar residues; that stretch reads SVSHRAIGSTGQNQSP. Residues 140–166 form a disordered region; sequence SVSHRAIGSTGQNQSPGKVFKGKKMPG. Residue Gln-153 is modified to N5-methylglutamine.

The protein belongs to the universal ribosomal protein uL3 family. As to quaternary structure, part of the 50S ribosomal subunit. Forms a cluster with proteins L14 and L19. Post-translationally, methylated by PrmB.

Functionally, one of the primary rRNA binding proteins, it binds directly near the 3'-end of the 23S rRNA, where it nucleates assembly of the 50S subunit. This Psychrobacter cryohalolentis (strain ATCC BAA-1226 / DSM 17306 / VKM B-2378 / K5) protein is Large ribosomal subunit protein uL3.